We begin with the raw amino-acid sequence, 529 residues long: uncharacterized protein (529 aa).

A signal peptide spans 1-20 (MYFLILILVLLLIMVAAATA).

This is an uncharacterized protein from Orgyia pseudotsugata multicapsid polyhedrosis virus (OpMNPV).